The sequence spans 360 residues: Peptide chain release factor 1 (360 aa).

An N5-methylglutamine modification is found at Gln-235. A disordered region spans residues Ala-284–Pro-313.

It belongs to the prokaryotic/mitochondrial release factor family. Methylated by PrmC. Methylation increases the termination efficiency of RF1.

The protein resides in the cytoplasm. In terms of biological role, peptide chain release factor 1 directs the termination of translation in response to the peptide chain termination codons UAG and UAA. The polypeptide is Peptide chain release factor 1 (Escherichia coli O127:H6 (strain E2348/69 / EPEC)).